A 55-amino-acid polypeptide reads, in one-letter code: uncharacterized protein (55 aa).

A coiled-coil region spans residues 17 to 44; the sequence is QNVNIALTKKRLDTAQQNADQTLKMIQH.

This is an uncharacterized protein from Bacillus subtilis (strain 168).